Reading from the N-terminus, the 148-residue chain is Lysozyme C, non-stomach isozyme (148 aa).

A signal peptide spans 1–18 (MKALLILGLLLFSVAVQG). In terms of domain architecture, C-type lysozyme spans 19-148 (KVFERCELAR…LTSYIQGCGV (130 aa)). 4 cysteine pairs are disulfide-bonded: Cys-24-Cys-146, Cys-48-Cys-134, Cys-83-Cys-99, and Cys-95-Cys-113. Active-site residues include Glu-53 and Asp-71.

The protein belongs to the glycosyl hydrolase 22 family. Expressed in blood cells.

It catalyses the reaction Hydrolysis of (1-&gt;4)-beta-linkages between N-acetylmuramic acid and N-acetyl-D-glucosamine residues in a peptidoglycan and between N-acetyl-D-glucosamine residues in chitodextrins.. In terms of biological role, lysozymes have primarily a bacteriolytic function; those in tissues and body fluids are associated with the monocyte-macrophage system and enhance the activity of immunoagents. The polypeptide is Lysozyme C, non-stomach isozyme (LYS) (Bos taurus (Bovine)).